An 83-amino-acid chain; its full sequence is MALLDFFLSRNKNTAHVAKERLQIIVAEQRKFKSEPDYLPQLKREILSVICKYVNIDPHMVTIQLEQKNEDISVLELNIILPD.

This sequence belongs to the MinE family.

Functionally, prevents the cell division inhibition by proteins MinC and MinD at internal division sites while permitting inhibition at polar sites. This ensures cell division at the proper site by restricting the formation of a division septum at the midpoint of the long axis of the cell. This is Cell division topological specificity factor from Buchnera aphidicola subsp. Schizaphis graminum (strain Sg).